A 298-amino-acid chain; its full sequence is UDP-3-O-acyl-N-acetylglucosamine deacetylase (298 aa).

3 residues coordinate Zn(2+): His-75, His-232, and Asp-236. The Proton donor role is filled by His-259.

It belongs to the LpxC family. The cofactor is Zn(2+).

The catalysed reaction is a UDP-3-O-[(3R)-3-hydroxyacyl]-N-acetyl-alpha-D-glucosamine + H2O = a UDP-3-O-[(3R)-3-hydroxyacyl]-alpha-D-glucosamine + acetate. Its pathway is glycolipid biosynthesis; lipid IV(A) biosynthesis; lipid IV(A) from (3R)-3-hydroxytetradecanoyl-[acyl-carrier-protein] and UDP-N-acetyl-alpha-D-glucosamine: step 2/6. Functionally, catalyzes the hydrolysis of UDP-3-O-myristoyl-N-acetylglucosamine to form UDP-3-O-myristoylglucosamine and acetate, the committed step in lipid A biosynthesis. This is UDP-3-O-acyl-N-acetylglucosamine deacetylase from Nitratiruptor sp. (strain SB155-2).